Reading from the N-terminus, the 233-residue chain is Uracil-DNA glycosylase (233 aa).

Catalysis depends on D70, which acts as the Proton acceptor.

It belongs to the uracil-DNA glycosylase (UDG) superfamily. UNG family.

The protein resides in the cytoplasm. The catalysed reaction is Hydrolyzes single-stranded DNA or mismatched double-stranded DNA and polynucleotides, releasing free uracil.. Functionally, excises uracil residues from the DNA which can arise as a result of misincorporation of dUMP residues by DNA polymerase or due to deamination of cytosine. This is Uracil-DNA glycosylase from Helicobacter pylori (strain Shi470).